The sequence spans 294 residues: N-acetylmuramic acid 6-phosphate etherase (294 aa).

The region spanning Val-54–Lys-217 is the SIS domain. The Proton donor role is filled by Glu-82. Glu-113 is an active-site residue.

This sequence belongs to the GCKR-like family. MurNAc-6-P etherase subfamily. In terms of assembly, homodimer.

It carries out the reaction N-acetyl-D-muramate 6-phosphate + H2O = N-acetyl-D-glucosamine 6-phosphate + (R)-lactate. It participates in amino-sugar metabolism; N-acetylmuramate degradation. Functionally, specifically catalyzes the cleavage of the D-lactyl ether substituent of MurNAc 6-phosphate, producing GlcNAc 6-phosphate and D-lactate. The chain is N-acetylmuramic acid 6-phosphate etherase from Bacillus cytotoxicus (strain DSM 22905 / CIP 110041 / 391-98 / NVH 391-98).